Here is a 361-residue protein sequence, read N- to C-terminus: MTNENYTGVTTGTIATACSLAALESILDTSDIDCVKVKTPKKTLDIIIDECKRLSHSSACAVAHKNPYNDPDVTVGLAIVATVELLDKTSDGDSVIITGGEGVGKITKPGLQIPVGEYAINPVPRRMIRKNLERILPEDKVAKVTISIPEGRKIAKKTMNPKLGIVGGISVIGTTGIARSMSSEAYKNSIVTQIDVALALNLDNLVFVPGNIGEKLALKQLDITKQHIIQTGNYVGFMFEEAKKRGIDEFTFFGHIGKLIKIAGGIFNTKHAIADGRREIMITHAGICGADTKTLQKLYDSKTTEDMLDILDEENLHLDVCNSIALAIKERCMQRFDLDLNVILVDMEGNYLNDNFERFLL.

It belongs to the CbiD family.

The enzyme catalyses Co-precorrin-5B + S-adenosyl-L-methionine = Co-precorrin-6A + S-adenosyl-L-homocysteine. Its pathway is cofactor biosynthesis; adenosylcobalamin biosynthesis; cob(II)yrinate a,c-diamide from sirohydrochlorin (anaerobic route): step 6/10. In terms of biological role, catalyzes the methylation of C-1 in cobalt-precorrin-5B to form cobalt-precorrin-6A. This chain is Cobalt-precorrin-5B C(1)-methyltransferase, found in Methanobrevibacter smithii (strain ATCC 35061 / DSM 861 / OCM 144 / PS).